Consider the following 361-residue polypeptide: Porphobilinogen deaminase (361 aa).

An S-(dipyrrolylmethanemethyl)cysteine modification is found at Cys-265. A disordered region spans residues 341 to 361 (LPPSSNTPTPQPITPITTNNS).

Belongs to the HMBS family. Dipyrromethane serves as cofactor.

It catalyses the reaction 4 porphobilinogen + H2O = hydroxymethylbilane + 4 NH4(+). It participates in porphyrin-containing compound metabolism; protoporphyrin-IX biosynthesis; coproporphyrinogen-III from 5-aminolevulinate: step 2/4. Functionally, tetrapolymerization of the monopyrrole PBG into the hydroxymethylbilane pre-uroporphyrinogen in several discrete steps. The protein is Porphobilinogen deaminase (HEM3) of Debaryomyces hansenii (strain ATCC 36239 / CBS 767 / BCRC 21394 / JCM 1990 / NBRC 0083 / IGC 2968) (Yeast).